A 281-amino-acid polypeptide reads, in one-letter code: Radiation response metalloprotease IrrE (281 aa).

Position 82 (H82) interacts with Zn(2+). The active site involves E83. Zn(2+) is bound by residues H86 and E113. Residues 262 to 281 (LPAGRSEPDADKPEAPGDQS) form a disordered region. Residues 267-281 (SEPDADKPEAPGDQS) are compositionally biased toward basic and acidic residues.

In terms of assembly, interacts with DdrOC.

Its activity is regulated as follows. Protease activity is inhibited by EDTA. Plays a central regulatory role in DNA repair and protection pathways in response to radiation stress. Acts as a site-specific metalloprotease that cleaves and inactivates the repressor proteins DdrOC and DdrOP3, resulting in induced expression of genes required for DNA repair and cell survival after exposure to radiation. The sequence is that of Radiation response metalloprotease IrrE from Deinococcus deserti (strain DSM 17065 / CIP 109153 / LMG 22923 / VCD115).